Reading from the N-terminus, the 84-residue chain is Small ribosomal subunit protein uS17 (84 aa).

Belongs to the universal ribosomal protein uS17 family. Part of the 30S ribosomal subunit.

Its function is as follows. One of the primary rRNA binding proteins, it binds specifically to the 5'-end of 16S ribosomal RNA. In Caldanaerobacter subterraneus subsp. tengcongensis (strain DSM 15242 / JCM 11007 / NBRC 100824 / MB4) (Thermoanaerobacter tengcongensis), this protein is Small ribosomal subunit protein uS17.